A 393-amino-acid polypeptide reads, in one-letter code: S-adenosylmethionine synthase 2 (393 aa).

E9 is a binding site for Mg(2+). H15 serves as a coordination point for ATP. E43 contacts K(+). L-methionine-binding residues include E56 and Q99. Residues 167-169 (DGK), 235-238 (SGRF), D246, 252-253 (RK), A269, K273, and K277 contribute to the ATP site. An L-methionine-binding site is contributed by D246. Position 277 (K277) interacts with L-methionine.

The protein belongs to the AdoMet synthase family. In terms of assembly, homotetramer. Mn(2+) serves as cofactor. Requires Mg(2+) as cofactor. It depends on Co(2+) as a cofactor. K(+) is required as a cofactor. The cofactor is NH4(+). As to expression, mostly expressed in roots, and, to a lower extent, in hypocotyls and cotyledons.

It is found in the cytoplasm. It carries out the reaction L-methionine + ATP + H2O = S-adenosyl-L-methionine + phosphate + diphosphate. The protein operates within amino-acid biosynthesis; S-adenosyl-L-methionine biosynthesis; S-adenosyl-L-methionine from L-methionine: step 1/1. With respect to regulation, inhibited by products of SAMS reaction (SAM, Pi, PPi), substrate analogs (cycloleucine and ethionine), and alternative nucleotides (GTP, CTP and ADP). Strongly repressed by PPPi. Functionally, catalyzes the formation of S-adenosylmethionine from methionine and ATP. The reaction comprises two steps that are both catalyzed by the same enzyme: formation of S-adenosylmethionine (AdoMet) and triphosphate, and subsequent hydrolysis of the triphosphate. This Catharanthus roseus (Madagascar periwinkle) protein is S-adenosylmethionine synthase 2 (SAMS2).